The chain runs to 376 residues: Heptahelical transmembrane protein ADIPOR1 (376 aa).

Topologically, residues 1–90 are cytoplasmic; that stretch reads MGEEAAMATM…LSLFSWHNET (90 aa). Residues 20–46 are disordered; that stretch reads PAAAPAPAKGGGSKKKRKQQKREEKRK. A helical transmembrane segment spans residues 91–111; sequence INIWTHLLGFVLFFGLTVLHL. Residues 112–179 lie on the Extracellular side of the membrane; the sequence is GQYFPQVADL…AAAAATTRWP (68 aa). Residues 180–200 traverse the membrane as a helical segment; that stretch reads FFVFLAGAMFCLLSSAACHLL. Over 201 to 216 the chain is Cytoplasmic; the sequence is SCHSHRLNLFLIRLDY. Residues 217 to 237 traverse the membrane as a helical segment; it reads TGIAVMIVVSFFPPIYYIFQC. Over 238 to 240 the chain is Extracellular; that stretch reads EPR. The chain crosses the membrane as a helical span at residues 241–261; it reads WQVVYLSAITAAGVATVYALM. Residues 262-274 lie on the Cytoplasmic side of the membrane; that stretch reads SPRLSAARYRAHR. A helical membrane pass occupies residues 275 to 295; the sequence is ALLFVAMGLSGVVPAAHAVAV. Topologically, residues 296 to 303 are extracellular; sequence NWHEPRRN. A helical membrane pass occupies residues 304-324; it reads VTLAYEGAMAASYLAGTAFYL. Residues 325–344 lie on the Cytoplasmic side of the membrane; it reads TRVPERWRPGMFDLCGHSHQ. The helical transmembrane segment at 345–365 threads the bilayer; that stretch reads IFHALVIAGALAHYAAAIVFI. The Extracellular segment spans residues 366 to 376; it reads QARDEMGCPAP.

The protein belongs to the ADIPOR family.

It is found in the membrane. Its function is as follows. May play a role in abiotic stress response. In Oryza sativa subsp. japonica (Rice), this protein is Heptahelical transmembrane protein ADIPOR1 (ADIPOR1).